The chain runs to 306 residues: Putative S-adenosyl-L-methionine-dependent methyltransferase FRAAL5401 (306 aa).

S-adenosyl-L-methionine is bound by residues aspartate 126 and 155-156 (DL). A disordered region spans residues 201–225 (LSAPESRVATENRPNPKPGDEDRTK).

Belongs to the UPF0677 family.

Functionally, exhibits S-adenosyl-L-methionine-dependent methyltransferase activity. The protein is Putative S-adenosyl-L-methionine-dependent methyltransferase FRAAL5401 of Frankia alni (strain DSM 45986 / CECT 9034 / ACN14a).